Reading from the N-terminus, the 109-residue chain is Small ribosomal subunit protein uS10 (109 aa).

This sequence belongs to the universal ribosomal protein uS10 family. Part of the 30S ribosomal subunit.

Functionally, involved in the binding of tRNA to the ribosomes. In Wolbachia pipientis wMel, this protein is Small ribosomal subunit protein uS10.